A 381-amino-acid chain; its full sequence is Formate dehydrogenase, mitochondrial (381 aa).

The transit peptide at 1-25 directs the protein to the mitochondrion; sequence MAMSRVASTAARAITSPSSLVFTRE. Substrate is bound by residues Ile125 and Asn149. Residues Thr150, 204–205, Asp224, 259–263, Asn285, Asp311, and 335–338 each bind NAD(+); these read RI, PLTEK, and HISG.

This sequence belongs to the D-isomer specific 2-hydroxyacid dehydrogenase family. FDH subfamily. As to quaternary structure, homodimer. Found at high levels in developing tubers, at intermediate level in stems, veins, stolons, and stamens, and at low level in leaves and roots.

It is found in the mitochondrion. It carries out the reaction formate + NAD(+) = CO2 + NADH. In terms of biological role, catalyzes the NAD(+)-dependent oxidation of formate to carbon dioxide. Involved in the cell stress response. Involved in formate-dependent oxygen uptake coupled to ATP synthesis. This Solanum tuberosum (Potato) protein is Formate dehydrogenase, mitochondrial.